A 212-amino-acid chain; its full sequence is Pyridoxine/pyridoxamine 5'-phosphate oxidase 1 (212 aa).

Substrate-binding positions include 8-11 (RTDY) and lysine 66. FMN is bound by residues 61 to 66 (RIVLLK), 76 to 77 (FT), lysine 83, and glutamine 105. Tyrosine 123, arginine 127, and serine 131 together coordinate substrate. FMN is bound by residues 140 to 141 (QS) and tryptophan 184. 190–192 (RLH) serves as a coordination point for substrate. Arginine 194 is a binding site for FMN.

The protein belongs to the pyridoxamine 5'-phosphate oxidase family. As to quaternary structure, homodimer. The cofactor is FMN.

The catalysed reaction is pyridoxamine 5'-phosphate + O2 + H2O = pyridoxal 5'-phosphate + H2O2 + NH4(+). It catalyses the reaction pyridoxine 5'-phosphate + O2 = pyridoxal 5'-phosphate + H2O2. The protein operates within cofactor metabolism; pyridoxal 5'-phosphate salvage; pyridoxal 5'-phosphate from pyridoxamine 5'-phosphate: step 1/1. It participates in cofactor metabolism; pyridoxal 5'-phosphate salvage; pyridoxal 5'-phosphate from pyridoxine 5'-phosphate: step 1/1. Catalyzes the oxidation of either pyridoxine 5'-phosphate (PNP) or pyridoxamine 5'-phosphate (PMP) into pyridoxal 5'-phosphate (PLP). The chain is Pyridoxine/pyridoxamine 5'-phosphate oxidase 1 from Ralstonia nicotianae (strain ATCC BAA-1114 / GMI1000) (Ralstonia solanacearum).